The chain runs to 113 residues: Large ribosomal subunit protein uL22 (113 aa).

This sequence belongs to the universal ribosomal protein uL22 family. In terms of assembly, part of the 50S ribosomal subunit.

Its function is as follows. This protein binds specifically to 23S rRNA; its binding is stimulated by other ribosomal proteins, e.g. L4, L17, and L20. It is important during the early stages of 50S assembly. It makes multiple contacts with different domains of the 23S rRNA in the assembled 50S subunit and ribosome. In terms of biological role, the globular domain of the protein is located near the polypeptide exit tunnel on the outside of the subunit, while an extended beta-hairpin is found that lines the wall of the exit tunnel in the center of the 70S ribosome. This chain is Large ribosomal subunit protein uL22, found in Xylella fastidiosa (strain M12).